A 465-amino-acid chain; its full sequence is Argininosuccinate lyase (465 aa).

The protein belongs to the lyase 1 family. Argininosuccinate lyase subfamily.

The protein localises to the cytoplasm. The catalysed reaction is 2-(N(omega)-L-arginino)succinate = fumarate + L-arginine. It functions in the pathway amino-acid biosynthesis; L-arginine biosynthesis; L-arginine from L-ornithine and carbamoyl phosphate: step 3/3. This chain is Argininosuccinate lyase, found in Rhodopseudomonas palustris (strain BisB18).